Reading from the N-terminus, the 444-residue chain is Na(+)-translocating NADH-quinone reductase subunit A (444 aa).

Belongs to the NqrA family. In terms of assembly, composed of six subunits; NqrA, NqrB, NqrC, NqrD, NqrE and NqrF.

The catalysed reaction is a ubiquinone + n Na(+)(in) + NADH + H(+) = a ubiquinol + n Na(+)(out) + NAD(+). Functionally, NQR complex catalyzes the reduction of ubiquinone-1 to ubiquinol by two successive reactions, coupled with the transport of Na(+) ions from the cytoplasm to the periplasm. NqrA to NqrE are probably involved in the second step, the conversion of ubisemiquinone to ubiquinol. This chain is Na(+)-translocating NADH-quinone reductase subunit A, found in Shewanella amazonensis (strain ATCC BAA-1098 / SB2B).